The sequence spans 239 residues: tRNA1(Val) (adenine(37)-N6)-methyltransferase (239 aa).

Belongs to the methyltransferase superfamily. tRNA (adenine-N(6)-)-methyltransferase family.

The protein localises to the cytoplasm. It carries out the reaction adenosine(37) in tRNA1(Val) + S-adenosyl-L-methionine = N(6)-methyladenosine(37) in tRNA1(Val) + S-adenosyl-L-homocysteine + H(+). Functionally, specifically methylates the adenine in position 37 of tRNA(1)(Val) (anticodon cmo5UAC). This is tRNA1(Val) (adenine(37)-N6)-methyltransferase from Vibrio vulnificus (strain YJ016).